The chain runs to 301 residues: Hydroxymethylglutaryl-CoA lyase (301 aa).

The Pyruvate carboxyltransferase domain maps to 4-271 (VKVFEVGPRD…STGVDLEAVA (268 aa)). Arg-12 lines the substrate pocket. Positions 13, 204, and 206 each coordinate a divalent metal cation. Residue Cys-237 is part of the active site. Asn-246 is an a divalent metal cation binding site.

The protein belongs to the HMG-CoA lyase family.

The enzyme catalyses (3S)-3-hydroxy-3-methylglutaryl-CoA = acetoacetate + acetyl-CoA. It functions in the pathway metabolic intermediate metabolism; (S)-3-hydroxy-3-methylglutaryl-CoA degradation; acetoacetate from (S)-3-hydroxy-3-methylglutaryl-CoA: step 1/1. Its function is as follows. Involved in the catabolism of branched amino acids such as leucine. This chain is Hydroxymethylglutaryl-CoA lyase (mvaB), found in Pseudomonas mevalonii.